A 146-amino-acid polypeptide reads, in one-letter code: Large ribosomal subunit protein uL15 (146 aa).

Residues 1-54 (MTLRLNELAPAEGAKRDNRRLGRGIGSGVGKTGGRGVKGQKSRKSGGVRPGFEG) form a disordered region. The segment covering 23-37 (RGIGSGVGKTGGRGV) has biased composition (gly residues).

This sequence belongs to the universal ribosomal protein uL15 family. Part of the 50S ribosomal subunit.

Binds to the 23S rRNA. The polypeptide is Large ribosomal subunit protein uL15 (Acinetobacter baylyi (strain ATCC 33305 / BD413 / ADP1)).